A 371-amino-acid chain; its full sequence is L-lysine 4-hydroxylase (371 aa).

The Fe cation site is built by His-174, Glu-176, and His-310.

It belongs to the clavaminate synthase family. Fe(2+) is required as a cofactor.

The enzyme catalyses L-lysine + 2-oxoglutarate + O2 = (4R)-4-hydroxy-L-lysine + succinate + CO2. Alpha-ketoglutarate-dependent dioxygenase that in vitro catalyzes the regio- and stereoselective hydroxylation of L-lysine, leading to (4R)-4-hydroxy-L-lysine. This Niastella koreensis (strain DSM 17620 / KACC 11465 / NBRC 106392 / GR20-10) protein is L-lysine 4-hydroxylase.